Here is a 248-residue protein sequence, read N- to C-terminus: NADP-dependent 3-hydroxy acid dehydrogenase YdfG (248 aa).

NADP(+) contacts are provided by residues 7–12 (GATAGF), 32–33 (RR), 54–55 (DV), and Asn-81. Ser-134 contributes to the substrate binding site. NADP(+)-binding positions include Tyr-147, Lys-151, and 177–185 (PGLVGGTEF). Tyr-147 functions as the Proton acceptor in the catalytic mechanism.

Belongs to the short-chain dehydrogenases/reductases (SDR) family. As to quaternary structure, homotetramer.

It carries out the reaction 3-hydroxypropanoate + NADP(+) = 3-oxopropanoate + NADPH + H(+). It catalyses the reaction L-allo-threonine + NADP(+) = aminoacetone + CO2 + NADPH. In terms of biological role, NADP-dependent dehydrogenase with broad substrate specificity acting on 3-hydroxy acids. Catalyzes the NADP-dependent oxidation of L-allo-threonine to L-2-amino-3-keto-butyrate, which is spontaneously decarboxylated into aminoacetone. Also acts on D-threonine, L-serine, D-serine, D-3-hydroxyisobutyrate, L-3-hydroxyisobutyrate, D-glycerate and L-glycerate. Able to catalyze the reduction of the malonic semialdehyde to 3-hydroxypropionic acid. YdfG is apparently supplementing RutE, the presumed malonic semialdehyde reductase involved in pyrimidine degradation since both are able to detoxify malonic semialdehyde. This chain is NADP-dependent 3-hydroxy acid dehydrogenase YdfG, found in Salmonella typhi.